The primary structure comprises 458 residues: BPI fold-containing family B member 2 (458 aa).

Residues 1 to 20 form the signal peptide; the sequence is MAWASRLGLLLALLLPVVGA. Thr-52 carries the phosphothreonine; by FAM20C modification. Ser-60 carries the post-translational modification Phosphoserine; by FAM20C. N-linked (GlcNAc...) asparagine glycosylation is found at Asn-96, Asn-151, Asn-293, and Asn-332. Cys-137 and Cys-174 are oxidised to a cystine.

This sequence belongs to the BPI/LBP/Plunc superfamily. BPI/LBP family. In terms of tissue distribution, highly expressed in tonsils, especially in hypertrophic tonsils. Detected at very low levels in fetal liver.

The protein localises to the secreted. This chain is BPI fold-containing family B member 2 (BPIFB2), found in Homo sapiens (Human).